The primary structure comprises 175 residues: Small ribosomal subunit protein uS7 (175 aa).

Belongs to the universal ribosomal protein uS7 family. In terms of assembly, part of the 30S ribosomal subunit. Contacts proteins S9 and S11.

In terms of biological role, one of the primary rRNA binding proteins, it binds directly to 16S rRNA where it nucleates assembly of the head domain of the 30S subunit. Is located at the subunit interface close to the decoding center, probably blocks exit of the E-site tRNA. The chain is Small ribosomal subunit protein uS7 from Neorickettsia sennetsu (strain ATCC VR-367 / Miyayama) (Ehrlichia sennetsu).